Reading from the N-terminus, the 158-residue chain is C-type lectin galactose-binding isoform (158 aa).

The N-terminal stretch at methionine 1 to serine 23 is a signal peptide. 3 disulfides stabilise this stretch: cysteine 26–cysteine 37, cysteine 54–cysteine 154, and cysteine 129–cysteine 146. The C-type lectin domain maps to arginine 33–glutamine 155. Ca(2+)-binding residues include glutamine 119, aspartate 121, and glutamate 127. Positions glutamine 119 to aspartate 121 match the Galactose-binding motif. N-linked (GlcNAc...) asparagine glycosylation occurs at asparagine 134. Asparagine 142 and aspartate 143 together coordinate Ca(2+).

It belongs to the true venom lectin family. As to quaternary structure, homodimer; disulfide-linked. Expressed by the venom gland.

The protein localises to the secreted. Galactose-binding lectin that binds to and agglutinates erythrocytes in a calcium-dependent manner. The sequence is that of C-type lectin galactose-binding isoform from Pseudechis porphyriacus (Red-bellied black snake).